Reading from the N-terminus, the 261-residue chain is Small ribosomal subunit protein uS2 (261 aa).

Position 2 is an N-acetylserine (S2). The disordered stretch occupies residues 211–261 (EQNAAEDSKAEDAEEAPVADAEPDWSGETEDVDWAESGATPAAEEAAASNW). The segment covering 222 to 244 (DAEEAPVADAEPDWSGETEDVDW) has biased composition (acidic residues). Low complexity predominate over residues 245–261 (AESGATPAAEEAAASNW).

It belongs to the universal ribosomal protein uS2 family. As to quaternary structure, component of the small ribosomal subunit. Mature ribosomes consist of a small (40S) and a large (60S) subunit. The 40S subunit contains about 33 different proteins and 1 molecule of RNA (18S). The 60S subunit contains about 49 different proteins and 3 molecules of RNA (25S, 5.8S and 5S). Interacts with RPS21.

Its subcellular location is the cytoplasm. Functionally, required for the assembly and/or stability of the 40S ribosomal subunit. Required for the processing of the 20S rRNA-precursor to mature 18S rRNA in a late step of the maturation of 40S ribosomal subunits. This chain is Small ribosomal subunit protein uS2, found in Meyerozyma guilliermondii (strain ATCC 6260 / CBS 566 / DSM 6381 / JCM 1539 / NBRC 10279 / NRRL Y-324) (Yeast).